Here is a 529-residue protein sequence, read N- to C-terminus: UDP-glucuronosyltransferase 2B28 (529 aa).

Residues 1–24 (MALKWTSVLLLIHLGCYFSSGSCG) form the signal peptide. Residue Lys135 is modified to N6-succinyllysine. The N-linked (GlcNAc...) asparagine glycan is linked to Asn315. The helical transmembrane segment at 495–517 (GFLLACVATVIFVVTKFCLFCFW) threads the bilayer.

It belongs to the UDP-glycosyltransferase family. Expressed in the liver, breast and kidney.

It localises to the endoplasmic reticulum membrane. It is found in the cytoplasm. Its subcellular location is the perinuclear region. The enzyme catalyses glucuronate acceptor + UDP-alpha-D-glucuronate = acceptor beta-D-glucuronoside + UDP + H(+). In terms of biological role, UDP-glucuronosyltransferase (UGT) that catalyzes phase II biotransformation reactions in which lipophilic substrates are conjugated with glucuronic acid to increase the metabolite's water solubility, thereby facilitating excretion into either the urine or bile. Essential for the elimination and detoxification of drugs, xenobiotics and endogenous compounds. Catalyzes the glucuronidation of endogenous steroid hormones such as androgens (androsterone, 3alpha-androstanediol) and estrogens (estradiol, estrone). Catalyzes the glucuronidation of bile acid substrates, which are natural detergents for dietary lipids absorption. Displays glucuronidation activity toward the phenolic compounds eugenol. Lack UDP-glucuronosyltransferase (UGT) activity. In Homo sapiens (Human), this protein is UDP-glucuronosyltransferase 2B28.